The sequence spans 354 residues: S-adenosylmethionine-dependent nucleotide dehydratase RSAD2 (354 aa).

Positions Ala-62–Leu-282 constitute a Radical SAM core domain. [4Fe-4S] cluster is bound by residues Cys-76, Cys-80, and Cys-83.

This sequence belongs to the radical SAM superfamily. RSAD2 family. It depends on [4Fe-4S] cluster as a cofactor. In terms of tissue distribution, constitutively expressed in spleen, head kidney and trunk kidney. Following viral infection, detected in most organs including liver, gill, intestine, heart, muscle and brain.

It localises to the endoplasmic reticulum membrane. Interferon-inducible iron-sulfur (4FE-4S) cluster-binding antiviral protein which plays a major role in the cell antiviral state induced by type I and type II interferon. The polypeptide is S-adenosylmethionine-dependent nucleotide dehydratase RSAD2 (Siniperca chuatsi (Mandarin fish)).